We begin with the raw amino-acid sequence, 644 residues long: Cyclin-dependent kinase C-2 C (644 aa).

The Protein kinase domain occupies 105–389 (FQKLEKIGQG…ASSALNSEYF (285 aa)). ATP-binding positions include 111 to 119 (IGQGTYSSV) and Lys134. Tyr116 carries the phosphotyrosine modification. Asp229 serves as the catalytic Proton acceptor. Phosphothreonine is present on Thr263. Residues 420 to 427 (RKRANLKL) carry the Nuclear localization signal motif. Residues 565-576 (SKLSRIGERHGS) show a composition bias toward basic and acidic residues. The tract at residues 565-591 (SKLSRIGERHGSLDGSGLDFSQREEDS) is disordered.

This sequence belongs to the protein kinase superfamily. CMGC Ser/Thr protein kinase family. CDC2/CDKX subfamily. Autophosphorylated. In terms of tissue distribution, expressed specifically in flowers and pollen.

The protein localises to the nucleus. This Arabidopsis thaliana (Mouse-ear cress) protein is Cyclin-dependent kinase C-2 C.